Here is a 419-residue protein sequence, read N- to C-terminus: MTMQLGLALVLGVAMCLGCGQPLLRAPERPFCVLWNVPSARCKARFGVHLPLEALGITANHGQRFHGQNITIFYKSQLGLYPYFGPRGTAHNGGIPQAVSLDHHLARAAYQIHRSLRPGFTGLAVLDWEEWCPLWAGNWGRRQAYQAASCAWAQRVYPNLDPQEQLCKARAGFEEAARALMEDTLRLGRMLRPHGLWGFYHYPACGNGWHGTASNYTGHCHAAALARNTQLYWLWAASSALFPSIYLPPGLPPAYHQAFVRYRLEEAFRVALVGHPHPLPVLAYARLTHRNSGRFLSQDELVQTIGVSAALGASGVVLWGDLSFSSSEEECWHLRGYLVGTLGPYVINVTRAAMACSHQRCHGHGRCAWQDPGQLKVFLHLHPGGSPGAWESFSCRCYWGWAGPTCQEPRPELGPEEAT.

Residues 1–16 form the signal peptide; that stretch reads MTMQLGLALVLGVAMC. Cystine bridges form between C42/C331, C205/C220, C356/C367, C361/C395, and C397/C406. N-linked (GlcNAc...) asparagine glycosylation is present at N69. The active-site Proton donor is the E129. N215 carries N-linked (GlcNAc...) asparagine glycosylation. Residues 352 to 407 enclose the EGF-like domain; sequence AAMACSHQRCHGHGRCAWQDPGQLKVFLHLHPGGSPGAWESFSCRCYWGWAGPTCQ.

This sequence belongs to the glycosyl hydrolase 56 family. Post-translationally, N-glycosylated. As to expression, highly expressed in bladder, spleen and liver. Expressed at low levels in the kidney.

The protein resides in the secreted. It localises to the cell membrane. It is found in the cytoplasmic vesicle. Its subcellular location is the secretory vesicle. The protein localises to the acrosome. The protein resides in the endoplasmic reticulum. It localises to the early endosome. The enzyme catalyses Random hydrolysis of (1-&gt;4)-linkages between N-acetyl-beta-D-glucosamine and D-glucuronate residues in hyaluronate.. Functionally, facilitates sperm penetration into the layer of cumulus cells surrounding the egg by digesting hyaluronic acid. Involved in induction of the acrosome reaction in the sperm. Involved in follicular atresia, the breakdown of immature ovarian follicles that are not selected to ovulate. Induces ovarian granulosa cell apoptosis, possibly via apoptotic signaling pathway involving CASP8 and CASP3 activation, and poly(ADP-ribose) polymerase (PARP) cleavage. Has no hyaluronidase activity in embryonic fibroblasts in vitro. Has no hyaluronidase activity in granulosa cells in vitro. The polypeptide is Hyaluronidase-3 (HYAL3) (Sus scrofa (Pig)).